The chain runs to 202 residues: Pectinesterase inhibitor 11 (202 aa).

The signal sequence occupies residues 1-21 (MAKQIFYTLFLFLLSTAILTA). A disulfide bond links Cys43 and Cys52. The N-linked (GlcNAc...) asparagine glycan is linked to Asn76. Cys109 and Cys160 form a disulfide bridge.

It belongs to the PMEI family.

It localises to the secreted. The protein resides in the extracellular space. The protein localises to the apoplast. In terms of biological role, pectin methylesterase (PME) inhibitor involved in the maintenance of cell wall integrity in response to necrotrophic pathogens. Modulates PME activity and pectin methylesterification during infection by Botrytis cinerea and contributes to resistance against the pathogen. In Arabidopsis thaliana (Mouse-ear cress), this protein is Pectinesterase inhibitor 11.